We begin with the raw amino-acid sequence, 980 residues long: Phosphoenolpyruvate carboxylase (980 aa).

Catalysis depends on residues H182 and K625.

Belongs to the PEPCase type 1 family. It depends on Mg(2+) as a cofactor.

It carries out the reaction oxaloacetate + phosphate = phosphoenolpyruvate + hydrogencarbonate. Its function is as follows. Forms oxaloacetate, a four-carbon dicarboxylic acid source for the tricarboxylic acid cycle. The chain is Phosphoenolpyruvate carboxylase from Bordetella pertussis (strain Tohama I / ATCC BAA-589 / NCTC 13251).